The sequence spans 723 residues: Peroxisomal bifunctional enzyme (723 aa).

Residues 1–282 are enoyl-CoA hydratase / isomerase; that stretch reads MAEYTRLHNA…LAERKANKWS (282 aa). The residue at position 38 (Lys38) is an N6-succinyllysine. Gly101 contacts substrate. Lys165 bears the N6-acetyllysine; alternate mark. At Lys165 the chain carries N6-succinyllysine; alternate. Position 171 is an N6-acetyllysine (Lys171). Position 219 is an N6-acetyllysine; alternate (Lys219). Lys219 carries the N6-succinyllysine; alternate modification. Lys250 carries the post-translational modification N6-acetyllysine. Residues Lys280 and Lys290 each carry the N6-succinyllysine modification. Residues 283–572 are 3-hydroxyacyl-CoA dehydrogenase; the sequence is TPSGASWKTA…DVLCELGRFG (290 aa). 3 positions are modified to N6-acetyllysine: Lys346, Lys350, and Lys464. Lys532 carries the N6-succinyllysine modification. Residue Thr548 is modified to Phosphothreonine. Lys577 bears the N6-succinyllysine mark. N6-acetyllysine; alternate occurs at positions 584, 591, and 710. Lys584, Lys591, and Lys710 each carry N6-succinyllysine; alternate. Residues 699–723 are disordered; it reads KKLASQGNPPQKEWQSLAGSPSSKL. Residues 703-723 show a composition bias toward polar residues; that stretch reads SQGNPPQKEWQSLAGSPSSKL. Ser718 is subject to Phosphoserine. The short motif at 721–723 is the Microbody targeting signal element; the sequence is SKL. Lys722 is modified (N6-succinyllysine).

It in the N-terminal section; belongs to the enoyl-CoA hydratase/isomerase family. In the C-terminal section; belongs to the 3-hydroxyacyl-CoA dehydrogenase family. In terms of assembly, monomer. In terms of processing, acetylated, leading to enhanced enzyme activity. Acetylation is enhanced by up to 80% after treatment either with trichostin A (TSA) or with nicotinamide (NAM) with highest increase on Lys-346. Acetylation and enzyme activity increased by about 1.5% on addition of fatty acids.

It localises to the peroxisome. It carries out the reaction a (3S)-3-hydroxyacyl-CoA = a (2E)-enoyl-CoA + H2O. The enzyme catalyses a 4-saturated-(3S)-3-hydroxyacyl-CoA = a (3E)-enoyl-CoA + H2O. The catalysed reaction is a (3Z)-enoyl-CoA = a 4-saturated (2E)-enoyl-CoA. It catalyses the reaction a (3E)-enoyl-CoA = a 4-saturated (2E)-enoyl-CoA. It carries out the reaction a (3S)-3-hydroxyacyl-CoA + NAD(+) = a 3-oxoacyl-CoA + NADH + H(+). The enzyme catalyses (2S,3S)-3-hydroxy-2-methylbutanoyl-CoA = (2E)-2-methylbut-2-enoyl-CoA + H2O. The catalysed reaction is (3S)-hydroxyhexadecanoyl-CoA + NAD(+) = 3-oxohexadecanoyl-CoA + NADH + H(+). It catalyses the reaction (3S)-hydroxyhexadecanoyl-CoA = (2E)-hexadecenoyl-CoA + H2O. It carries out the reaction (2E)-hexadecenedioyl-CoA + H2O = (3S)-hydroxyhexadecanedioyl-CoA. The enzyme catalyses (3S)-hydroxyhexadecanedioyl-CoA + NAD(+) = 3-oxohexadecanedioyl-CoA + NADH + H(+). The catalysed reaction is (3E,5Z)-tetradecadienoyl-CoA = (2E,5Z)-tetradecadienoyl-CoA. It catalyses the reaction (3E,5Z)-octadienoyl-CoA = (2E,5Z)-octadienoyl-CoA. It carries out the reaction (3S)-hydroxydecanoyl-CoA + NAD(+) = 3-oxodecanoyl-CoA + NADH + H(+). The enzyme catalyses (3E)-decenoyl-CoA = (2E)-decenoyl-CoA. The catalysed reaction is (3Z)-hexenoyl-CoA = (2E)-hexenoyl-CoA. It catalyses the reaction (3E)-hexenoyl-CoA = (2E)-hexenoyl-CoA. It carries out the reaction (3S)-hydroxydecanoyl-CoA = (2E)-decenoyl-CoA + H2O. The enzyme catalyses (3S)-hydroxyhexanoyl-CoA = (2E)-hexenoyl-CoA + H2O. It functions in the pathway lipid metabolism; fatty acid beta-oxidation. Its activity is regulated as follows. Enzyme activity enhanced by acetylation. Functionally, peroxisomal trifunctional enzyme possessing 2-enoyl-CoA hydratase, 3-hydroxyacyl-CoA dehydrogenase, and delta 3, delta 2-enoyl-CoA isomerase activities. Catalyzes two of the four reactions of the long chain fatty acids peroxisomal beta-oxidation pathway. Can also use branched-chain fatty acids such as 2-methyl-2E-butenoyl-CoA as a substrate, which is hydrated into (2S,3S)-3-hydroxy-2-methylbutanoyl-CoA. Optimal isomerase for 2,5 double bonds into 3,5 form isomerization in a range of enoyl-CoA species. Also able to isomerize both 3-cis and 3-trans double bonds into the 2-trans form in a range of enoyl-CoA species. Regulates the amount of medium-chain dicarboxylic fatty acids which are essential regulators of all fatty acid oxidation pathways. Also involved in the degradation of long-chain dicarboxylic acids through peroxisomal beta-oxidation. This Pongo abelii (Sumatran orangutan) protein is Peroxisomal bifunctional enzyme (EHHADH).